A 183-amino-acid chain; its full sequence is Potassium-transporting ATPase KdpC subunit (183 aa).

A helical membrane pass occupies residues 10-30 (LTVFTLILFAVIYPLAIYGIA).

It belongs to the KdpC family. The system is composed of three essential subunits: KdpA, KdpB and KdpC.

The protein localises to the cell inner membrane. Part of the high-affinity ATP-driven potassium transport (or Kdp) system, which catalyzes the hydrolysis of ATP coupled with the electrogenic transport of potassium into the cytoplasm. This subunit acts as a catalytic chaperone that increases the ATP-binding affinity of the ATP-hydrolyzing subunit KdpB by the formation of a transient KdpB/KdpC/ATP ternary complex. The protein is Potassium-transporting ATPase KdpC subunit of Flavobacterium johnsoniae (strain ATCC 17061 / DSM 2064 / JCM 8514 / BCRC 14874 / CCUG 350202 / NBRC 14942 / NCIMB 11054 / UW101) (Cytophaga johnsonae).